The following is a 497-amino-acid chain: Guanosine-5'-triphosphate,3'-diphosphate pyrophosphatase (497 aa).

Belongs to the GppA/Ppx family. GppA subfamily.

It carries out the reaction guanosine 3'-diphosphate 5'-triphosphate + H2O = guanosine 3',5'-bis(diphosphate) + phosphate + H(+). The protein operates within purine metabolism; ppGpp biosynthesis; ppGpp from GTP: step 2/2. Functionally, catalyzes the conversion of pppGpp to ppGpp. Guanosine pentaphosphate (pppGpp) is a cytoplasmic signaling molecule which together with ppGpp controls the 'stringent response', an adaptive process that allows bacteria to respond to amino acid starvation, resulting in the coordinated regulation of numerous cellular activities. This is Guanosine-5'-triphosphate,3'-diphosphate pyrophosphatase from Vibrio atlanticus (strain LGP32) (Vibrio splendidus (strain Mel32)).